The sequence spans 559 residues: Poly(U)-binding-splicing factor PUF60 (559 aa).

The inhibits homodimerization stretch occupies residues 1 to 516 (MATATIALQV…EDAEIIVKIF (516 aa)). Glycyl lysine isopeptide (Lys-Gly) (interchain with G-Cter in SUMO2) cross-links involve residues glutamine 14 and lysine 43. At threonine 60 the chain carries Phosphothreonine. Residues 77–559 (QSIKSVLVKQ…ERFDNSDLSA (483 aa)) are inhibits transcriptional repression, interaction with ERCC3 and apoptosis induction. Lysine 80 is covalently cross-linked (Glycyl lysine isopeptide (Lys-Gly) (interchain with G-Cter in SUMO2)). The residue at position 112 (serine 112) is a Phosphoserine. RRM domains are found at residues 129–207 (CRVY…RPSN) and 226–304 (NRIY…KAVT). Serine 244 carries the phosphoserine modification. At lysine 251 the chain carries N6-acetyllysine. At threonine 314 the chain carries Phosphothreonine. Residues 416–437 (KKEKEEEELFPESERPEMLSEQ) form a disordered region. Residue lysine 419 forms a Glycyl lysine isopeptide (Lys-Gly) (interchain with G-Cter in SUMO2) linkage. Residues 427-437 (ESERPEMLSEQ) show a composition bias toward basic and acidic residues. Lysine 454 is modified (N6-acetyllysine). Lysine 458 is covalently cross-linked (Glycyl lysine isopeptide (Lys-Gly) (interchain with G-Cter in SUMO2)). In terms of domain architecture, RRM 3; atypical spans 462 to 549 (TVMVLRNMVD…RKVVAEVYDQ (88 aa)).

Belongs to the RRM half pint family. As to quaternary structure, homodimer. Associates with the spliceosome. Found in a complex with RO60 and Y5 RNA. Found in a complex with FUBP1 and far upstream element (FUSE) DNA segment. Interacts directly with ERCC3. Interacts with CDK7 and GTF2H1. Interacts with SRSF11/P54. Does not interact with ERCC3 in xeroderma pigmentosum complementation group B (XPB) cells. Interacts with ARGLU1; interaction may be involved in ARGLU1-mediated modulation of alternative splicing. Isoform 2 is expressed in colonic epithelium and colorectal epithelium cancer (at protein level). Isoform 6 is expressed in colorectal epithelial cancer but below detection level in colonic epithelium. Expressed in heart, brain, placenta, lung, liver, skeletal muscle, kidney, pancreas, spleen, thymus, prostate, testis, ovary, small intestine, colon and peripheral blood leukocytes.

It is found in the nucleus. Its function is as follows. DNA- and RNA-binding protein, involved in several nuclear processes such as pre-mRNA splicing, apoptosis and transcription regulation. In association with FUBP1 regulates MYC transcription at the P2 promoter through the core-TFIIH basal transcription factor. Acts as a transcriptional repressor through the core-TFIIH basal transcription factor. Represses FUBP1-induced transcriptional activation but not basal transcription. Decreases ERCC3 helicase activity. Does not repress TFIIH-mediated transcription in xeroderma pigmentosum complementation group B (XPB) cells. Is also involved in pre-mRNA splicing. Promotes splicing of an intron with weak 3'-splice site and pyrimidine tract in a cooperative manner with U2AF2. Involved in apoptosis induction when overexpressed in HeLa cells. Isoform 6 failed to repress MYC transcription and inhibited FIR-induced apoptosis in colorectal cancer. Isoform 6 may contribute to tumor progression by enabling increased MYC expression and greater resistance to apoptosis in tumors than in normal cells. Modulates alternative splicing of several mRNAs. Binds to relaxed DNA of active promoter regions. Binds to the pyrimidine tract and 3'-splice site regions of pre-mRNA; binding is enhanced in presence of U2AF2. Binds to Y5 RNA in association with RO60. Binds to poly(U) RNA. This is Poly(U)-binding-splicing factor PUF60 from Homo sapiens (Human).